Here is a 355-residue protein sequence, read N- to C-terminus: Protein RecA (355 aa).

74–81 (GPESSGKT) contributes to the ATP binding site.

This sequence belongs to the RecA family.

It localises to the cytoplasm. Functionally, can catalyze the hydrolysis of ATP in the presence of single-stranded DNA, the ATP-dependent uptake of single-stranded DNA by duplex DNA, and the ATP-dependent hybridization of homologous single-stranded DNAs. It interacts with LexA causing its activation and leading to its autocatalytic cleavage. This Cytophaga hutchinsonii (strain ATCC 33406 / DSM 1761 / CIP 103989 / NBRC 15051 / NCIMB 9469 / D465) protein is Protein RecA.